Here is a 213-residue protein sequence, read N- to C-terminus: Orotate phosphoribosyltransferase (213 aa).

Lys26 contributes to the 5-phospho-alpha-D-ribose 1-diphosphate binding site. Residue 34 to 35 (FF) participates in orotate binding. Residues 72–73 (YK), Arg99, Lys100, Lys103, His105, and 124–132 (DDVITAGTA) each bind 5-phospho-alpha-D-ribose 1-diphosphate. The orotate site is built by Thr128 and Arg156.

This sequence belongs to the purine/pyrimidine phosphoribosyltransferase family. PyrE subfamily. Homodimer. It depends on Mg(2+) as a cofactor.

It carries out the reaction orotidine 5'-phosphate + diphosphate = orotate + 5-phospho-alpha-D-ribose 1-diphosphate. It functions in the pathway pyrimidine metabolism; UMP biosynthesis via de novo pathway; UMP from orotate: step 1/2. In terms of biological role, catalyzes the transfer of a ribosyl phosphate group from 5-phosphoribose 1-diphosphate to orotate, leading to the formation of orotidine monophosphate (OMP). The polypeptide is Orotate phosphoribosyltransferase (Shigella dysenteriae serotype 1 (strain Sd197)).